Consider the following 505-residue polypeptide: MLFLNAKFIDLDLGENAVIVNEEDLKGTSYYPQDRVLIESHAGSVIGNIYSTKTMVNKGEVGMLVSELAEISISEGEEVKLRHAEKPESIPFIKKKMDGQVLNPHEIRTIIDEIVSKKLSNIELSAFVSSTYINGMNMDEISEMTKRIAETGDMIAWEKSLVVDIHSIGGVPGNKYALLSIPILAAAGITVPKTSSRAITSPAGTADVMEVLTNVELKEEEIKRIVKTTNGCLAWGGGVNLAPADDIIINVERPVSIDPQPQLLASVMAKKIATGIKYTVIDIPVGKGVKIKNEAEGAKLARKFIELGESLNIKVECVLTYGGQPLGRAIGPALEAREAIEALQDPKNAPKSLIEKALSLAGILLELGGAAQIGEGQNLAWEILESGKALEKFNQIITEQGGTPKKPEEIELGDYVEEILAPIDGYITDISNTAITNVVKEAGAPRDKKAGILLNSKIGNKVKQGDVLYTIYSGSEERLVSAINLARRVYPVKVEGMLIERISKF.

Residues Gly-170, 196-201 (SRAITS), and Thr-205 each bind AMP. Catalysis depends on Asp-258, which acts as the Proton donor. Residues Ser-266 and Lys-290 each contribute to the AMP site.

This sequence belongs to the thymidine/pyrimidine-nucleoside phosphorylase family. Type 2 subfamily.

It carries out the reaction AMP + phosphate = alpha-D-ribose 1,5-bisphosphate + adenine. It catalyses the reaction CMP + phosphate = cytosine + alpha-D-ribose 1,5-bisphosphate. The enzyme catalyses UMP + phosphate = alpha-D-ribose 1,5-bisphosphate + uracil. Catalyzes the conversion of AMP and phosphate to adenine and ribose 1,5-bisphosphate (R15P). Exhibits phosphorylase activity toward CMP and UMP in addition to AMP. Functions in an archaeal AMP degradation pathway, together with R15P isomerase and RubisCO. The chain is AMP phosphorylase from Methanococcus maripaludis (strain C5 / ATCC BAA-1333).